Here is a 226-residue protein sequence, read N- to C-terminus: NADH-quinone oxidoreductase subunit B 2 (226 aa).

C37, C38, C103, and C132 together coordinate [4Fe-4S] cluster.

The protein belongs to the complex I 20 kDa subunit family. In terms of assembly, NDH-1 is composed of 14 different subunits. Subunits NuoB, C, D, E, F, and G constitute the peripheral sector of the complex. [4Fe-4S] cluster is required as a cofactor.

It localises to the cell membrane. The enzyme catalyses a quinone + NADH + 5 H(+)(in) = a quinol + NAD(+) + 4 H(+)(out). In terms of biological role, NDH-1 shuttles electrons from NADH, via FMN and iron-sulfur (Fe-S) centers, to quinones in the respiratory chain. The immediate electron acceptor for the enzyme in this species is believed to be a menaquinone. Couples the redox reaction to proton translocation (for every two electrons transferred, four hydrogen ions are translocated across the cytoplasmic membrane), and thus conserves the redox energy in a proton gradient. The sequence is that of NADH-quinone oxidoreductase subunit B 2 from Salinispora arenicola (strain CNS-205).